The primary structure comprises 264 residues: Glycerol uptake facilitator protein (264 aa).

The Cytoplasmic segment spans residues 1 to 3 (MDK). A helical membrane pass occupies residues 4 to 32 (SLKANCIGEFLGTALLIFFGVGCVAALKV). The Periplasmic portion of the chain corresponds to 33–37 (AGASF). Residues 38–58 (GLWEISIMWGMGVALAVYATA) form a helical membrane-spanning segment. Residues 59–61 (GLS) lie on the Cytoplasmic side of the membrane. An intramembrane segment occupies 62–65 (GAHL). The short motif at 66–68 (NPA) is the NPA 1 element. An intramembrane region (helical) is located at residues 66 to 76 (NPAVTIALWKF). Residues 77–82 (ACFDGK) lie on the Cytoplasmic side of the membrane. A helical transmembrane segment spans residues 83–106 (KVIPYIISQMLGAFFAAALVYALY). Residues 107–141 (RNVFIDYETVHNIVRGTQESLSLAGTFSTYPHPSL) are Periplasmic-facing. A helical membrane pass occupies residues 142-167 (SIGGAFAVEFVITAILMALIMALTDD). Residues 168 to 175 (GNGVPRGP) lie on the Cytoplasmic side of the membrane. Residues 176-192 (LAPLLIGILIAVIGGAM) traverse the membrane as a helical segment. Residues 193 to 196 (GPLT) lie on the Periplasmic side of the membrane. Residues 197-200 (GFAM) lie within the membrane without spanning it. The short motif at 201–203 (NPA) is the NPA 2 element. Positions 201 to 214 (NPARDFGPKFFAYL) form an intramembrane region, helical. Residues 215 to 229 (AGWGELALTGGREIP) are Periplasmic-facing. The helical transmembrane segment at 230–252 (YFIVPMVAPVLGALAGAWLYKKA) threads the bilayer. The Cytoplasmic portion of the chain corresponds to 253–264 (IGGNLPCNCGCE).

Belongs to the MIP/aquaporin (TC 1.A.8) family.

Its subcellular location is the cell inner membrane. It carries out the reaction glycerol(in) = glycerol(out). Its function is as follows. Mediates glycerol diffusion across the cytoplasmic membrane via a pore-type mechanism. The chain is Glycerol uptake facilitator protein (glpF) from Haemophilus influenzae (strain ATCC 51907 / DSM 11121 / KW20 / Rd).